We begin with the raw amino-acid sequence, 71 residues long: Translation initiation factor IF-1 (71 aa).

The 71-residue stretch at 1–71 (MSKDDLIQFT…LTKGRVIHRH (71 aa)) folds into the S1-like domain.

It belongs to the IF-1 family. As to quaternary structure, component of the 30S ribosomal translation pre-initiation complex which assembles on the 30S ribosome in the order IF-2 and IF-3, IF-1 and N-formylmethionyl-tRNA(fMet); mRNA recruitment can occur at any time during PIC assembly.

The protein resides in the cytoplasm. Its function is as follows. One of the essential components for the initiation of protein synthesis. Stabilizes the binding of IF-2 and IF-3 on the 30S subunit to which N-formylmethionyl-tRNA(fMet) subsequently binds. Helps modulate mRNA selection, yielding the 30S pre-initiation complex (PIC). Upon addition of the 50S ribosomal subunit IF-1, IF-2 and IF-3 are released leaving the mature 70S translation initiation complex. This is Translation initiation factor IF-1 from Rickettsia akari (strain Hartford).